The following is a 178-amino-acid chain: Large ribosomal subunit protein bL25 (178 aa).

This sequence belongs to the bacterial ribosomal protein bL25 family. CTC subfamily. In terms of assembly, part of the 50S ribosomal subunit; part of the 5S rRNA/L5/L18/L25 subcomplex. Contacts the 5S rRNA. Binds to the 5S rRNA independently of L5 and L18.

This is one of the proteins that binds to the 5S RNA in the ribosome where it forms part of the central protuberance. The sequence is that of Large ribosomal subunit protein bL25 from Helicobacter hepaticus (strain ATCC 51449 / 3B1).